The sequence spans 253 residues: TasA anchoring/assembly protein (253 aa).

Positions 1-32 are cleaved as a signal peptide; the sequence is MFRLFHNQQKAKTKLKVLLIFQLSVIFSLTAA. An important for TasA fiber formation region spans residues 50–57; the sequence is TFDVSLQT. Residues 190–241 are compositionally biased toward basic and acidic residues; that stretch reads EKPTVPKKETKSDVKKENETTQKDIPEKTMKEETSQEAVTKEKETQSDQKES. The segment at 190-253 is disordered; that stretch reads EKPTVPKKET…EDEKSNEADQ (64 aa).

The protein localises to the secreted. Its subcellular location is the cell wall. Functionally, required for biofilm formation. Required for the proper anchoring and polymerization of TasA amyloid fibers at the cell surface. Is also a minor component of TasA fibers. The chain is TasA anchoring/assembly protein from Bacillus subtilis (strain 168).